The following is a 179-amino-acid chain: MAKLHEVYKDKVVAELQEKFGFSSVMQVPLIEKITLNMGVGEALADKKILDNAVADLAAISGQKPLITKARKSVAGFKVREGYPIGCKVTLRGERMWDFFERLVSIAIPRIRDFRGVSAKSFDGRGNYSMGVREQIIFPEIDYDKVDRVRGMDITITTSAKSDEEGRALLEAFNFPFKK.

The protein belongs to the universal ribosomal protein uL5 family. Part of the 50S ribosomal subunit; part of the 5S rRNA/L5/L18/L25 subcomplex. Contacts the 5S rRNA and the P site tRNA. Forms a bridge to the 30S subunit in the 70S ribosome.

Functionally, this is one of the proteins that bind and probably mediate the attachment of the 5S RNA into the large ribosomal subunit, where it forms part of the central protuberance. In the 70S ribosome it contacts protein S13 of the 30S subunit (bridge B1b), connecting the 2 subunits; this bridge is implicated in subunit movement. Contacts the P site tRNA; the 5S rRNA and some of its associated proteins might help stabilize positioning of ribosome-bound tRNAs. This chain is Large ribosomal subunit protein uL5, found in Pseudoalteromonas translucida (strain TAC 125).